The chain runs to 155 residues: Large ribosomal subunit protein uL22 (155 aa).

Belongs to the universal ribosomal protein uL22 family. As to quaternary structure, part of the 50S ribosomal subunit. Contacts the macrolide antibiotic tylosin in the polypeptide exit tunnel.

Functionally, this protein binds specifically to 23S rRNA. It makes multiple contacts with different domains of the 23S rRNA in the assembled 50S subunit and ribosome. Contacts all 6 domains of the 23S rRNA, helping stabilize their relative orientation. An extended beta-hairpin in the C-terminus forms part of the polypeptide exit tunnel, in which it helps forms a bend with protein L4, while most of the rest of the protein is located at the polypeptide exit tunnel on the outside of the subunit. The chain is Large ribosomal subunit protein uL22 from Haloarcula marismortui (strain ATCC 43049 / DSM 3752 / JCM 8966 / VKM B-1809) (Halobacterium marismortui).